The chain runs to 185 residues: Prorelaxin 1 (185 aa).

The signal sequence occupies residues 1–22 (MSSRFLLQLLGFWLLLSQPCRT). 3 disulfides stabilise this stretch: Cys36-Cys171, Cys48-Cys185, and Cys170-Cys175. A propeptide spans 58 to 156 (SQEEPALLAR…LKYLQSDTHS (99 aa)) (connecting peptide). Positions 135–161 (RLGEAEDGSPPGLKYLQSDTHSRKKRE) are disordered.

The protein belongs to the insulin family. In terms of assembly, heterodimer of a B chain and an A chain linked by two disulfide bonds.

The protein resides in the secreted. In terms of biological role, relaxin is an ovarian hormone that acts with estrogen to produce dilatation of the birth canal in many mammals. This is Prorelaxin 1 (Rln1) from Mus musculus (Mouse).